The following is a 287-amino-acid chain: NH(3)-dependent NAD(+) synthetase (287 aa).

ATP is bound at residue G53–S60. Position 59 (D59) interacts with Mg(2+). Residue R146 coordinates deamido-NAD(+). T166 contributes to the ATP binding site. E171 is a Mg(2+) binding site. Residues K179 and D186 each coordinate deamido-NAD(+). The ATP site is built by K195 and T217. Position 266–267 (H266–K267) interacts with deamido-NAD(+).

Belongs to the NAD synthetase family. Homodimer.

It catalyses the reaction deamido-NAD(+) + NH4(+) + ATP = AMP + diphosphate + NAD(+) + H(+). It participates in cofactor biosynthesis; NAD(+) biosynthesis; NAD(+) from deamido-NAD(+) (ammonia route): step 1/1. Catalyzes the ATP-dependent amidation of deamido-NAD to form NAD. Uses ammonia as a nitrogen source. The protein is NH(3)-dependent NAD(+) synthetase of Deinococcus radiodurans (strain ATCC 13939 / DSM 20539 / JCM 16871 / CCUG 27074 / LMG 4051 / NBRC 15346 / NCIMB 9279 / VKM B-1422 / R1).